A 382-amino-acid chain; its full sequence is Galactose-1-phosphate uridylyltransferase (382 aa).

2 residues coordinate Zn(2+): Cys52 and Cys55. Residues Ala61 and 77–78 (ND) each bind UDP-alpha-D-glucose. His121 lines the Zn(2+) pocket. Position 185 (Asn185) interacts with UDP-alpha-D-glucose. Residue His196 participates in Zn(2+) binding. Residue His198 is the Tele-UMP-histidine intermediate of the active site. Gln200 contributes to the UDP-alpha-D-glucose binding site. 4 residues coordinate Fe cation: Glu214, His313, His330, and His332. Residues 345–348 (KFLV) and 350–351 (FE) each bind UDP-alpha-D-glucose.

The protein belongs to the galactose-1-phosphate uridylyltransferase type 1 family. Homodimer. Zn(2+) is required as a cofactor.

The enzyme catalyses alpha-D-galactose 1-phosphate + UDP-alpha-D-glucose = alpha-D-glucose 1-phosphate + UDP-alpha-D-galactose. Its pathway is carbohydrate metabolism; galactose metabolism. Essential for growth on galactose but not for cellulase induction. This chain is Galactose-1-phosphate uridylyltransferase (gal7), found in Hypocrea jecorina (Trichoderma reesei).